Consider the following 428-residue polypeptide: Adenylosuccinate synthetase (428 aa).

GTP is bound by residues 12 to 18 and 40 to 42; these read GDEGKGK and GHT. Catalysis depends on D13, which acts as the Proton acceptor. Residues D13 and G40 each coordinate Mg(2+). Residues 13 to 16, 38 to 41, T130, R144, Q225, T240, and R304 contribute to the IMP site; these read DEGK and NAGH. The Proton donor role is filled by H41. 300–306 provides a ligand contact to substrate; the sequence is VNTGRSR. GTP contacts are provided by residues R306, 332–334, and 414–416; these read KID and GVG.

The protein belongs to the adenylosuccinate synthetase family. Homodimer. Requires Mg(2+) as cofactor.

Its subcellular location is the cytoplasm. The enzyme catalyses IMP + L-aspartate + GTP = N(6)-(1,2-dicarboxyethyl)-AMP + GDP + phosphate + 2 H(+). It participates in purine metabolism; AMP biosynthesis via de novo pathway; AMP from IMP: step 1/2. Its function is as follows. Plays an important role in the de novo pathway of purine nucleotide biosynthesis. Catalyzes the first committed step in the biosynthesis of AMP from IMP. The protein is Adenylosuccinate synthetase of Clostridium beijerinckii (strain ATCC 51743 / NCIMB 8052) (Clostridium acetobutylicum).